A 76-amino-acid chain; its full sequence is DNA gyrase inhibitor YacG (76 aa).

Residues C7, C10, C26, and C30 each coordinate Zn(2+).

The protein belongs to the DNA gyrase inhibitor YacG family. Interacts with GyrB. Zn(2+) serves as cofactor.

Its function is as follows. Inhibits all the catalytic activities of DNA gyrase by preventing its interaction with DNA. Acts by binding directly to the C-terminal domain of GyrB, which probably disrupts DNA binding by the gyrase. This is DNA gyrase inhibitor YacG from Pseudoalteromonas translucida (strain TAC 125).